We begin with the raw amino-acid sequence, 242 residues long: Probable transcriptional regulatory protein PG_0097 (242 aa).

Belongs to the TACO1 family.

It is found in the cytoplasm. This chain is Probable transcriptional regulatory protein PG_0097, found in Porphyromonas gingivalis (strain ATCC BAA-308 / W83).